The following is a 190-amino-acid chain: Thymidylate kinase (190 aa).

7–14 (GVDTCGKS) is a binding site for ATP.

Belongs to the thymidylate kinase family.

The catalysed reaction is dTMP + ATP = dTDP + ADP. In terms of biological role, phosphorylation of dTMP to form dTDP in both de novo and salvage pathways of dTTP synthesis. The protein is Thymidylate kinase of Wolinella succinogenes (strain ATCC 29543 / DSM 1740 / CCUG 13145 / JCM 31913 / LMG 7466 / NCTC 11488 / FDC 602W) (Vibrio succinogenes).